The following is a 172-amino-acid chain: MNRIVEKWMYRSRWLFAPVYIGLSLGLLALTIKFFQSMYEILPNIFALSEADLVLRLLSLIDLALVGGLLIMVIFSGYENFITNMEIEGAKDKLSWLGNMDAESLKNKVAASIVAISSIHLLGVFMDLKNIPDNKLLWYVVLHLTFVFSAFVMGYLEKISKRSKRANKANQG.

The next 4 membrane-spanning stretches (helical) occupy residues 15-35, 57-77, 108-128, and 136-156; these read LFAP…IKFF, LLSL…IFSG, KVAA…FMDL, and LLWY…MGYL.

It belongs to the UPF0114 family.

It is found in the cell membrane. This chain is UPF0114 protein PMI3225, found in Proteus mirabilis (strain HI4320).